The following is a 102-amino-acid chain: Class I hydrophobin 1 (102 aa).

The N-terminal stretch at 1–18 (MSLFKILVAAATVATALA) is a signal peptide. Intrachain disulfides connect Cys37/Cys84, Cys45/Cys78, Cys46/Cys63, and Cys85/Cys97.

Belongs to the fungal hydrophobin family.

It localises to the secreted. Its subcellular location is the cell wall. Its function is as follows. Aerial growth, conidiation, and dispersal of filamentous fungi in the environment rely upon a capability of their secreting small amphipathic proteins called hydrophobins (HPBs) with low sequence identity. Class I can self-assemble into an outermost layer of rodlet bundles on aerial cell surfaces, conferring cellular hydrophobicity that supports fungal growth, development and dispersal; whereas Class II form highly ordered films at water-air interfaces through intermolecular interactions but contribute nothing to the rodlet structure. Hyd1 is essential for stress tolerance, conidial hydrophobicity, adhesion to insect cuticle, and insect infectivity/pathogenicity. Plays a neglectable role in hyphal growth and asexual development. The polypeptide is Class I hydrophobin 1 (Metarhizium robertsii (strain ARSEF 23 / ATCC MYA-3075) (Metarhizium anisopliae (strain ARSEF 23))).